A 222-amino-acid polypeptide reads, in one-letter code: Thiopurine S-methyltransferase (222 aa).

Positions 10, 45, 66, and 123 each coordinate S-adenosyl-L-methionine.

It belongs to the class I-like SAM-binding methyltransferase superfamily. TPMT family.

It localises to the cytoplasm. The enzyme catalyses S-adenosyl-L-methionine + a thiopurine = S-adenosyl-L-homocysteine + a thiopurine S-methylether.. The sequence is that of Thiopurine S-methyltransferase from Pseudomonas fluorescens (strain ATCC BAA-477 / NRRL B-23932 / Pf-5).